Reading from the N-terminus, the 578-residue chain is Probable acyl-activating enzyme 12, peroxisomal (578 aa).

The Microbody targeting signal signature appears at 576 to 578 (SRL).

The protein belongs to the ATP-dependent AMP-binding enzyme family. Expressed at low levels in leaves.

It is found in the peroxisome. In terms of biological role, may act as an acid--thiol ligase that activates carboxylic acids by forming acyl-CoAs. The chain is Probable acyl-activating enzyme 12, peroxisomal (AAE12) from Arabidopsis thaliana (Mouse-ear cress).